A 214-amino-acid chain; its full sequence is Adenylate kinase (214 aa).

10 to 15 (GAGKGT) serves as a coordination point for ATP. The segment at 30–59 (STGDMLRAAVKAGTPLGLEAKKVMDAGQLV) is NMP. AMP is bound by residues T31, R36, 57 to 59 (QLV), 85 to 88 (GFPR), and Q92. An LID region spans residues 122 to 159 (GRRVHPGSGRVYHIVYNPPKVEGKDDVTGEDLAIRPDD). Residues R123 and 132–133 (VY) each bind ATP. AMP-binding residues include R156 and R167. Q200 provides a ligand contact to ATP.

It belongs to the adenylate kinase family. In terms of assembly, monomer.

The protein resides in the cytoplasm. It carries out the reaction AMP + ATP = 2 ADP. The protein operates within purine metabolism; AMP biosynthesis via salvage pathway; AMP from ADP: step 1/1. Functionally, catalyzes the reversible transfer of the terminal phosphate group between ATP and AMP. Plays an important role in cellular energy homeostasis and in adenine nucleotide metabolism. The polypeptide is Adenylate kinase (Shewanella loihica (strain ATCC BAA-1088 / PV-4)).